Reading from the N-terminus, the 654-residue chain is Integrator complex subunit 9 (654 aa).

The 1D-myo-inositol hexakisphosphate site is built by Met-1, Arg-2, Thr-18, Phe-19, Arg-504, Lys-508, and Arg-509.

Belongs to the metallo-beta-lactamase superfamily. RNA-metabolizing metallo-beta-lactamase-like family. INTS9 subfamily. As to quaternary structure, belongs to the multiprotein complex Integrator, at least composed of IntS1, IntS2, IntS3, IntS4, omd/IntS5, IntS6, defl/IntS7, IntS8, IntS9, IntS10, IntS11, IntS12, asun/IntS13, IntS14 and IntS15. The core complex associates with protein phosphatase 2A subunits mts/PP2A and Pp2A-29B, to form the Integrator-PP2A (INTAC) complex. Within the complex, interacts with IntS1 and IntS12. IntS9 is part of the RNA endonuclease subcomplex, composed of IntS4, IntS9, IntS11 and inositol hexakisphosphate (InsP6).

The protein resides in the nucleus. The protein localises to the cytoplasm. It localises to the cytosol. Its function is as follows. Component of the integrator complex, a multiprotein complex that terminates RNA polymerase II (Pol II) transcription in the promoter-proximal region of genes. The integrator complex provides a quality checkpoint during transcription elongation by driving premature transcription termination of transcripts that are unfavorably configured for transcriptional elongation: the complex terminates transcription by (1) catalyzing dephosphorylation of the C-terminal domain (CTD) of Pol II subunit Polr2A/Rbp1 and Spt5, and (2) degrading the exiting nascent RNA transcript via endonuclease activity. The integrator complex is also involved in the 3'-end processing of the U7 snRNA, and also the spliceosomal snRNAs U1, U2, U4 and U5. The chain is Integrator complex subunit 9 from Drosophila melanogaster (Fruit fly).